We begin with the raw amino-acid sequence, 375 residues long: 1-deoxy-D-xylulose 5-phosphate reductoisomerase (375 aa).

Thr-12, Gly-13, Ser-14, Ile-15, Asn-39, and Asn-115 together coordinate NADPH. Lys-116 contacts 1-deoxy-D-xylulose 5-phosphate. Position 117 (Glu-117) interacts with NADPH. Position 141 (Asp-141) interacts with Mn(2+). 1-deoxy-D-xylulose 5-phosphate-binding residues include Ser-142, Glu-143, Ser-163, and His-186. Residue Glu-143 participates in Mn(2+) binding. Gly-192 contributes to the NADPH binding site. 1-deoxy-D-xylulose 5-phosphate contacts are provided by Ser-199, Asn-204, Lys-205, and Glu-208. Glu-208 is a Mn(2+) binding site.

It belongs to the DXR family. The cofactor is Mg(2+). Mn(2+) serves as cofactor.

The catalysed reaction is 2-C-methyl-D-erythritol 4-phosphate + NADP(+) = 1-deoxy-D-xylulose 5-phosphate + NADPH + H(+). It functions in the pathway isoprenoid biosynthesis; isopentenyl diphosphate biosynthesis via DXP pathway; isopentenyl diphosphate from 1-deoxy-D-xylulose 5-phosphate: step 1/6. Functionally, catalyzes the NADPH-dependent rearrangement and reduction of 1-deoxy-D-xylulose-5-phosphate (DXP) to 2-C-methyl-D-erythritol 4-phosphate (MEP). This is 1-deoxy-D-xylulose 5-phosphate reductoisomerase from Thermotoga neapolitana (strain ATCC 49049 / DSM 4359 / NBRC 107923 / NS-E).